The chain runs to 114 residues: uncharacterized protein (114 aa).

It to M.jannaschii MJ0310 and MJ0714.

This is an uncharacterized protein from Methanocaldococcus jannaschii (strain ATCC 43067 / DSM 2661 / JAL-1 / JCM 10045 / NBRC 100440) (Methanococcus jannaschii).